The following is an 863-amino-acid chain: Protein translocase subunit SecA (863 aa).

ATP-binding positions include Q88, 106 to 110, and D507; that span reads GEGKT. Residues 806–863 are disordered; that stretch reads KSHEQNEQFLSNTTESGVNENGEAQITKVPRNSPCPCGSGKKYKECHGKSGPKKGILA. A compositionally biased stretch (polar residues) spans 812-829; that stretch reads EQFLSNTTESGVNENGEA. Residues C840, C842, C851, and H852 each coordinate Zn(2+).

The protein belongs to the SecA family. Monomer and homodimer. Part of the essential Sec protein translocation apparatus which comprises SecA, SecYEG and auxiliary proteins SecDF-YajC and YidC. It depends on Zn(2+) as a cofactor.

It localises to the cell inner membrane. The protein resides in the cytoplasm. The enzyme catalyses ATP + H2O + cellular proteinSide 1 = ADP + phosphate + cellular proteinSide 2.. Functionally, part of the Sec protein translocase complex. Interacts with the SecYEG preprotein conducting channel. Has a central role in coupling the hydrolysis of ATP to the transfer of proteins into and across the cell membrane, serving as an ATP-driven molecular motor driving the stepwise translocation of polypeptide chains across the membrane. This is Protein translocase subunit SecA from Campylobacter lari (strain RM2100 / D67 / ATCC BAA-1060).